Reading from the N-terminus, the 491-residue chain is Fibrinogen beta chain (491 aa).

Positions 1–30 (MKRMVSWSFHKLKTMKHLLLLLLCVFLVKS) are cleaved as a signal peptide. The residue at position 31 (Q31) is a Pyrrolidone carboxylic acid. Residues 44–75 (RGHRPLDKKREEAPSLRPAPPPISGGGYRARP) form a disordered region. The tract at residues 45–47 (GHR) is beta-chain polymerization, binding distal domain of another fibrin. Over residues 47 to 57 (RPLDKKREEAP) the composition is skewed to basic and acidic residues. The stretch at 157-222 (KRQKQVKDNE…ESDVSAQMEY (66 aa)) forms a coiled coil. Intrachain disulfides connect C231/C316 and C241/C270. Positions 232–488 (NIPVVSGKEC…KMSMKIRPFF (257 aa)) constitute a Fibrinogen C-terminal domain. Residue N394 is glycosylated (N-linked (GlcNAc...) asparagine). C424 and C437 are joined by a disulfide.

Heterohexamer; disulfide linked. Contains 2 sets of 3 non-identical chains (alpha, beta and gamma). The 2 heterotrimers are in head to head conformation with the N-termini in a small central domain. Conversion of fibrinogen to fibrin is triggered by thrombin, which cleaves fibrinopeptides A and B from alpha and beta chains, and thus exposes the N-terminal polymerization sites responsible for the formation of the soft clot. The soft clot is converted into the hard clot by factor XIIIA which catalyzes the epsilon-(gamma-glutamyl)lysine cross-linking between gamma chains (stronger) and between alpha chains (weaker) of different monomers. In terms of tissue distribution, detected in blood plasma (at protein level).

It localises to the secreted. In terms of biological role, cleaved by the protease thrombin to yield monomers which, together with fibrinogen alpha (FGA) and fibrinogen gamma (FGG), polymerize to form an insoluble fibrin matrix. Fibrin has a major function in hemostasis as one of the primary components of blood clots. In addition, functions during the early stages of wound repair to stabilize the lesion and guide cell migration during re-epithelialization. Was originally thought to be essential for platelet aggregation, based on in vitro studies using anticoagulated blood. However subsequent studies have shown that it is not absolutely required for thrombus formation in vivo. Enhances expression of SELP in activated platelets. Maternal fibrinogen is essential for successful pregnancy. Fibrin deposition is also associated with infection, where it protects against IFNG-mediated hemorrhage. May also facilitate the antibacterial immune response via both innate and T-cell mediated pathways. The chain is Fibrinogen beta chain (FGB) from Homo sapiens (Human).